A 213-amino-acid polypeptide reads, in one-letter code: Ribosomal RNA small subunit methyltransferase G (213 aa).

Residues Gly81, Leu86, 132–133, and Arg147 each bind S-adenosyl-L-methionine; that span reads VE.

This sequence belongs to the methyltransferase superfamily. RNA methyltransferase RsmG family.

Its subcellular location is the cytoplasm. The catalysed reaction is guanosine(527) in 16S rRNA + S-adenosyl-L-methionine = N(7)-methylguanosine(527) in 16S rRNA + S-adenosyl-L-homocysteine. Specifically methylates the N7 position of guanine in position 527 of 16S rRNA. This is Ribosomal RNA small subunit methyltransferase G from Mannheimia succiniciproducens (strain KCTC 0769BP / MBEL55E).